The primary structure comprises 135 residues: Large ribosomal subunit protein uL16c (135 aa).

The protein belongs to the universal ribosomal protein uL16 family. Part of the 50S ribosomal subunit.

Its subcellular location is the plastid. It localises to the chloroplast. The polypeptide is Large ribosomal subunit protein uL16c (Eucalyptus globulus subsp. globulus (Tasmanian blue gum)).